Consider the following 109-residue polypeptide: Large ribosomal subunit protein uL22 (109 aa).

Belongs to the universal ribosomal protein uL22 family. As to quaternary structure, part of the 50S ribosomal subunit.

Functionally, this protein binds specifically to 23S rRNA; its binding is stimulated by other ribosomal proteins, e.g. L4, L17, and L20. It is important during the early stages of 50S assembly. It makes multiple contacts with different domains of the 23S rRNA in the assembled 50S subunit and ribosome. In terms of biological role, the globular domain of the protein is located near the polypeptide exit tunnel on the outside of the subunit, while an extended beta-hairpin is found that lines the wall of the exit tunnel in the center of the 70S ribosome. This chain is Large ribosomal subunit protein uL22, found in Laribacter hongkongensis (strain HLHK9).